The following is a 205-amino-acid chain: MRDAAEQLLVDPVEAARRLLGATLTGRGVSGVIVEVEAYGGVPDGPWPDAAAHSYKGLRARNFVMFGPPGRLYTYRSHGIHVCANVSCGPDGTAAAVLLRAAALEDGTDVARGRRGELVHTAALARGPGNLCAAMGITMADNGIDLFDPDSPVTLRLHEPLTAVCGPRVGVSQAADRPWRLWLPGRPEVSAYRRSPRAPAPGTSD.

The protein belongs to the DNA glycosylase MPG family.

In Mycolicibacterium paratuberculosis (strain ATCC BAA-968 / K-10) (Mycobacterium paratuberculosis), this protein is Putative 3-methyladenine DNA glycosylase.